Reading from the N-terminus, the 163-residue chain is UPF0303 protein SAV_5210 (163 aa).

Belongs to the UPF0303 family.

The protein is UPF0303 protein SAV_5210 of Streptomyces avermitilis (strain ATCC 31267 / DSM 46492 / JCM 5070 / NBRC 14893 / NCIMB 12804 / NRRL 8165 / MA-4680).